Consider the following 531-residue polypeptide: Muscarinic acetylcholine receptor M5 (531 aa).

The Extracellular segment spans residues 1 to 28 (MEGESYNESTVNGTPVNHQALERHGLWE). N7 carries an N-linked (GlcNAc...) asparagine glycan. Residues 29-52 (VITIAVVTAVVSLMTIVGNVLVMI) form a helical membrane-spanning segment. Residues 53–65 (SFKVNSQLKTVNN) lie on the Cytoplasmic side of the membrane. A helical transmembrane segment spans residues 66–86 (YYLLSLACADLIIGIFSMNLY). Topologically, residues 87 to 103 (TTYILMGRWVLGSLACD) are extracellular. A disulfide bond links C102 and C182. Residues 104-125 (LWLALDYVASNASVMNLLVISF) form a helical membrane-spanning segment. Residues 126-145 (DRYFSITRPLTYRAKRTPKR) are Cytoplasmic-facing. The helical transmembrane segment at 146–168 (AGIMIGLAWLVSFILWAPAILCW) threads the bilayer. Over 169–190 (QYLVGKRTVPPDECQIQFLSEP) the chain is Extracellular. Residues 191–213 (TITFGTAIAAFYIPVSVMTILYC) traverse the membrane as a helical segment. Over 214-442 (RIYRETEKRT…LVKERKAAQT (229 aa)) the chain is Cytoplasmic. 2 disordered regions span residues 259-295 (SLAQRERNQASWSSSRRSTSTTGKTTQATDLSADWEK) and 327-346 (EAKESPGKESNTQETKETVV). Positions 267–287 (QASWSSSRRSTSTTGKTTQAT) are enriched in low complexity. The span at 334-346 (KESNTQETKETVV) shows a compositional bias: polar residues. The helical transmembrane segment at 443–463 (LSAILLAFIITWTPYNIMVLV) threads the bilayer. Over 464–477 (STFCDKCVPVTLWH) the chain is Extracellular. The chain crosses the membrane as a helical span at residues 478-497 (LGYWLCYVNSTINPICYALC). Topologically, residues 498–531 (NRTFRKTFKLLLLCRWKKKKVEEKLYWQGNSKLP) are cytoplasmic. T500 and T504 each carry phosphothreonine.

Belongs to the G-protein coupled receptor 1 family. Muscarinic acetylcholine receptor subfamily. CHRM5 sub-subfamily.

It localises to the cell membrane. It is found in the postsynaptic cell membrane. Functionally, the muscarinic acetylcholine receptor mediates various cellular responses, including inhibition of adenylate cyclase, breakdown of phosphoinositides and modulation of potassium channels through the action of G proteins. Primary transducing effect is Pi turnover. The sequence is that of Muscarinic acetylcholine receptor M5 (Chrm5) from Rattus norvegicus (Rat).